The primary structure comprises 421 residues: Testin (421 aa).

The PET domain maps to 92 to 199 (MILTNPVAAK…GDVKLPCEMD (108 aa)). The tract at residues 133 to 164 (EKQPVAGSEGAQYRKKQLAKQLPAHDQDPSKC) is disordered. Basic and acidic residues predominate over residues 155–164 (PAHDQDPSKC). LIM zinc-binding domains follow at residues 234–297 (YSCY…CDSE), 299–359 (PRCA…NHAV), and 362–421 (QGCH…KMMS).

The protein belongs to the prickle / espinas / testin family. In terms of assembly, interacts via LIM domain 1 with ZYX. Interacts (via LIM domain 3) with ENAH and VASP. Interacts with ALKBH4, talin, actin, alpha-actinin, GRIP1 and PXN. Interacts (via LIM domain 2) with ACTL7A (via N-terminus). Heterodimer with ACTL7A; the heterodimer interacts with ENAH to form a heterotrimer.

It localises to the cytoplasm. It is found in the cell junction. Its subcellular location is the focal adhesion. Its function is as follows. Scaffold protein that may play a role in cell adhesion, cell spreading and in the reorganization of the actin cytoskeleton. Plays a role in the regulation of cell proliferation. May act as a tumor suppressor. This Colobus guereza (Mantled guereza) protein is Testin (TES).